The sequence spans 254 residues: 5-oxoprolinase subunit A (254 aa).

The protein belongs to the LamB/PxpA family. Forms a complex composed of PxpA, PxpB and PxpC.

It catalyses the reaction 5-oxo-L-proline + ATP + 2 H2O = L-glutamate + ADP + phosphate + H(+). Catalyzes the cleavage of 5-oxoproline to form L-glutamate coupled to the hydrolysis of ATP to ADP and inorganic phosphate. In Burkholderia lata (strain ATCC 17760 / DSM 23089 / LMG 22485 / NCIMB 9086 / R18194 / 383), this protein is 5-oxoprolinase subunit A.